The chain runs to 904 residues: Structural polyprotein (904 aa).

3 disordered regions span residues 1–27 (ADQE…VETE), 35–54 (VETP…SARS), and 320–348 (NNSN…KIGP). Positions 39–53 (NRINTPMAQDTSSAR) are enriched in polar residues. Positions 329–343 (VKEKTKNIPKPKTEN) are enriched in basic and acidic residues.

This sequence belongs to the picornaviruses polyprotein family. Specific enzymatic cleavages in vivo yield mature proteins.

The protein resides in the virion. The protein localises to the host cytoplasm. Functionally, structural polyprotein: precursor of all the viral capsid proteins. In terms of biological role, forms, together with protein VP2 and protein VP3, an icosahedral capsid protecting the viral RNA genome. The icosahedral capsid has a pseudo-T=3 symmetry with a diameter of approximately 300 Angstroms, and is composed of 60 copies of each capsid proteins. Forms, together with protein VP1 and protein VP3, an icosahedral capsid protecting the viral RNA genome. The icosahedral capsid has a pseudo-T=3 symmetry with a diameter of approximately 300 Angstroms, and is composed of 60 copies of each capsid proteins. Its function is as follows. Forms, together with protein VP1 and protein VP2, an icosahedral capsid protecting the viral RNA genome. The icosahedral capsid has a pseudo-T=3 symmetry with a diameter of approximately 300 Angstroms, and is composed of 60 copies of each capsid proteins. The protein is Structural polyprotein of Apis mellifera (Honeybee).